The chain runs to 310 residues: Protein OS-9 homolog (310 aa).

An N-terminal signal peptide occupies residues 1–40; it reads MFSSSMFPHLILPAIGSSKVRTMVLPFAFVGFFIFPICLA. Residues Asn-60, Asn-97, and Asn-104 are each glycosylated (N-linked (GlcNAc...) asparagine). Residues 129-255 enclose the MRH domain; it reads NVFLIENRGY…TIHVPGLCSL (127 aa). A mannooligosaccharide derivative contacts are provided by Trp-139 and Gln-151. Asn-204 carries N-linked (GlcNAc...) asparagine glycosylation. Intrachain disulfides connect Cys-208/Cys-241 and Cys-223/Cys-253. A mannooligosaccharide derivative is bound by residues Asp-209, Arg-215, Glu-237, and Tyr-243. 2 stretches are compositionally biased toward basic and acidic residues: residues 282–292 and 301–310; these read VDHKDSQHVVD and EVKEVETQSS. The tract at residues 282–310 is disordered; the sequence is VDHKDSQHVVDEVAQTSPPEVKEVETQSS.

The protein belongs to the OS-9 family. Interacts with missfolded ER lumenal proteins.

It is found in the endoplasmic reticulum membrane. Its function is as follows. Lectin involved in the quality control of the secretory pathway. As a member of the endoplasmic reticulum-associated degradation lumenal (ERAD-L) surveillance system, targets misfolded endoplasmic reticulum lumenal glycoproteins for degradation. The chain is Protein OS-9 homolog (yos9) from Schizosaccharomyces pombe (strain 972 / ATCC 24843) (Fission yeast).